We begin with the raw amino-acid sequence, 273 residues long: 4-hydroxy-tetrahydrodipicolinate reductase (273 aa).

Residues 12–17 (GAGGRM) and Glu38 each bind NAD(+). Arg39 contributes to the NADP(+) binding site. NAD(+) contacts are provided by residues 102-104 (GTT) and 126-129 (AANF). Catalysis depends on His159, which acts as the Proton donor/acceptor. Residue His160 participates in (S)-2,3,4,5-tetrahydrodipicolinate binding. Lys163 (proton donor) is an active-site residue. 169 to 170 (GT) serves as a coordination point for (S)-2,3,4,5-tetrahydrodipicolinate.

This sequence belongs to the DapB family. As to quaternary structure, homotetramer.

It is found in the cytoplasm. The catalysed reaction is (S)-2,3,4,5-tetrahydrodipicolinate + NAD(+) + H2O = (2S,4S)-4-hydroxy-2,3,4,5-tetrahydrodipicolinate + NADH + H(+). The enzyme catalyses (S)-2,3,4,5-tetrahydrodipicolinate + NADP(+) + H2O = (2S,4S)-4-hydroxy-2,3,4,5-tetrahydrodipicolinate + NADPH + H(+). The protein operates within amino-acid biosynthesis; L-lysine biosynthesis via DAP pathway; (S)-tetrahydrodipicolinate from L-aspartate: step 4/4. Its function is as follows. Catalyzes the conversion of 4-hydroxy-tetrahydrodipicolinate (HTPA) to tetrahydrodipicolinate. The polypeptide is 4-hydroxy-tetrahydrodipicolinate reductase (Shigella boydii serotype 18 (strain CDC 3083-94 / BS512)).